The chain runs to 381 residues: Queuine tRNA-ribosyltransferase (381 aa).

D92 (proton acceptor) is an active-site residue. Residues 92–96 (DSGGF), D146, Q190, and G217 each bind substrate. The RNA binding stretch occupies residues 248–254 (GVGRPED). The active-site Nucleophile is the D267. The segment at 272 to 276 (TRNAR) is RNA binding; important for wobble base 34 recognition. Zn(2+) is bound by residues C305, C307, C310, and H337.

It belongs to the queuine tRNA-ribosyltransferase family. Homodimer. Within each dimer, one monomer is responsible for RNA recognition and catalysis, while the other monomer binds to the replacement base PreQ1. Requires Zn(2+) as cofactor.

The enzyme catalyses 7-aminomethyl-7-carbaguanine + guanosine(34) in tRNA = 7-aminomethyl-7-carbaguanosine(34) in tRNA + guanine. The protein operates within tRNA modification; tRNA-queuosine biosynthesis. Catalyzes the base-exchange of a guanine (G) residue with the queuine precursor 7-aminomethyl-7-deazaguanine (PreQ1) at position 34 (anticodon wobble position) in tRNAs with GU(N) anticodons (tRNA-Asp, -Asn, -His and -Tyr). Catalysis occurs through a double-displacement mechanism. The nucleophile active site attacks the C1' of nucleotide 34 to detach the guanine base from the RNA, forming a covalent enzyme-RNA intermediate. The proton acceptor active site deprotonates the incoming PreQ1, allowing a nucleophilic attack on the C1' of the ribose to form the product. After dissociation, two additional enzymatic reactions on the tRNA convert PreQ1 to queuine (Q), resulting in the hypermodified nucleoside queuosine (7-(((4,5-cis-dihydroxy-2-cyclopenten-1-yl)amino)methyl)-7-deazaguanosine). This Xanthomonas oryzae pv. oryzae (strain MAFF 311018) protein is Queuine tRNA-ribosyltransferase.